Here is a 773-residue protein sequence, read N- to C-terminus: MLPTGEGAEGQDWHLDMQLPSKVVLSAAALLLVTAAYKLYKSRPAPVGQAGRNNKDHKAENETEALGQLAFQEAPPGTLPRGRRRRKASKGAGTSLDYSLVDPEDPCILDISRSEEATRKGSDESQGRQCPDSQQVPPPCGGQEAGTDVRGKPNPPHLPHSGCEPTSSSGRLIPGVGGSCVGDKLSPWPDSRPPEETGSGDLEAPNGWTDLTLVNGDMNQSWIFTHMTGVSRGEAGVLQAAADMGLATQQQEGATNASHTFSSVARIRMEENIIQKAEGPGLKGRVYDYFVESTSKADSRPVPCPAALADAPSPGPGPEPLVTGAASRDEAANTAGGGASEAASPQPVASPSAPGFSRKVSLLQIAENPELQLQPEGFRMPLPAHLDQRAQLSSACSHGEPHVQLVAGTNFFHIPLTPASALDVRLDLGNCYEMLTLAKRQGLETLKEAAYKVLSDNYLQVLRSPDIYGGLSGAERELILQRRFRGHKRLVVADMCPQDDSGRLCCYDNVQDAWHPLAQLPPEAMSRGCALCTLFNYLFVVSGCQEPGGQPSNRVFCYNPLTAIWSEVCPLNQARPHCRLVALEGHLYAIGGECLNTVERYDPRLDRWTFAPPLPNDTFALAHTATVCANEIFVTGGSLRYLLLRFSTQEQRWWAGPTGGSKDRTAEMVAVNGFLYRFDLNRSLGISVYRCSASTRLWYECATYRLPYPDAFQCAVVDDHIYCVGRRRMLCFLADHISPRFVSKELKGFPSARGTLLPAVLTLPVPDVPQTPV.

The chain crosses the membrane as a helical span at residues 23 to 40 (VVLSAAALLLVTAAYKLY). N-linked (GlcNAc...) asparagine glycosylation occurs at Asn-61. Disordered stretches follow at residues 64 to 99 (EALG…LDYS) and 114 to 207 (SEEA…APNG). Ser-89 is subject to Phosphoserine. Residues 114–126 (SEEATRKGSDESQ) are compositionally biased toward basic and acidic residues. N-linked (GlcNAc...) asparagine glycosylation occurs at Asn-256. The interval 296–355 (KADSRPVPCPAALADAPSPGPGPEPLVTGAASRDEAANTAGGGASEAASPQPVASPSAPG) is disordered. Kelch repeat units follow at residues 323–370 (TGAA…ENPE), 488–534 (KRLV…LCTL), 537–585 (YLFV…ALEG), 586–628 (HLYA…ATVC), and 631–673 (EIFV…AVNG). Positions 340–354 (SEAASPQPVASPSAP) are enriched in low complexity. Ser-361 carries the phosphoserine modification.

The protein localises to the membrane. This Mus musculus (Mouse) protein is Kelch domain-containing protein 7A (Klhdc7a).